We begin with the raw amino-acid sequence, 593 residues long: Vicilin Jug r 2.0101 (593 aa).

Basic and acidic residues-rich tracts occupy residues 46–76 and 97–118; these read LEEDQRSQEERERRRGRDVDDQNPRDPEQRY and RRCEQRRQQEERERQRGRDRQD. Residues 46-123 are disordered; sequence LEEDQRSQEE…RDRQDPQQQY (78 aa). IgE-binding regions lie at residues 49 to 58, 76 to 85, and 101 to 110; these read DQRSQEERER, YEQCQQQCER, and QRRQQEERER. The igE-binding. Involved in cross-reactivity with peanut allergen Ara h 2; able to inhibit binding of IgE from a peanut-allergic patient to Ara h 2 stretch occupies residues 140 to 149; that stretch reads QRQCQQRCER. Residues 150 to 178 are compositionally biased toward basic and acidic residues; that stretch reads QYKEQQGRERGPEASPRRESRGREEEQQR. Residues 150–184 form a disordered region; the sequence is QYKEQQGRERGPEASPRRESRGREEEQQRHNPYYF. T-cell epitope; recognized by the HLA-DRB1-restricted CD4(+) T-cells regions lie at residues 175-193 and 206-225; these read EQQRHNPYYFHSQSIRSRH and FTERTELLRGIENYRVVILD. Y182 is a Cu cation binding site. Cupin type-1 domains lie at 187–341 and 386–556; these read QSIR…DRLE and ISLK…EEIE. N229 is a glycosylation site (N-linked (GlcNAc...) asparagine). 6 T-cell epitope; recognized by the HLA-DRB1-restricted CD4(+) T-cells regions span residues 246-265, 302-321, 318-337, 382-401, 414-433, and 438-457; these read TRGRATLTLVSQETRESFNL, PGQFREYYAAGAKSPDQSYL, QSYLRVFSNDILVAALNTPR, SGGPISLKSESPSYSNQFGQ, QEMDVLVNYAEIKRGAMMVP, and KATVVVYVVEGTGRYEMACP. Cu cation-binding residues include C456 and H458. An igE-binding region spans residues 463 to 470; the sequence is SYEGQGRR. The T-cell epitope; recognized by the HLA-DRB1-restricted CD4(+) T-cells stretch occupies residues 478-497; it reads TGRFQKVTARLARGDIFVIP. H500 lines the Cu cation pocket. A coiled-coil region spans residues 529 to 556; sequence LAGQNNIINQLEREAKELSFNMPREEIE. An igE-binding region spans residues 541-555; it reads REAKELSFNMPREEI. 2 T-cell epitope; recognized by the HLA-DRB1-restricted CD4(+) T-cells regions span residues 542–561 and 558–577; these read EAKELSFNMPREEIEEIFES and IFESQMESYFVPTERQSRRG.

The protein belongs to the 7S seed storage protein family. In terms of processing, proteolytically cleaved. In terms of tissue distribution, expressed in seed (at protein level).

Its function is as follows. Seed storage protein. This is Vicilin Jug r 2.0101 from Juglans regia (English walnut).